Consider the following 176-residue polypeptide: NAD(P)H-quinone oxidoreductase subunit 6, chloroplastic (176 aa).

The next 5 membrane-spanning stretches (helical) occupy residues 10 to 30 (FLLV…VLLT), 32 to 52 (PIFS…FFSL), 61 to 81 (AQLL…VMFM), 92 to 112 (LWTV…ISLI), and 152 to 172 (FFLP…GAIA).

This sequence belongs to the complex I subunit 6 family. As to quaternary structure, NDH is composed of at least 16 different subunits, 5 of which are encoded in the nucleus.

The protein localises to the plastid. The protein resides in the chloroplast thylakoid membrane. It carries out the reaction a plastoquinone + NADH + (n+1) H(+)(in) = a plastoquinol + NAD(+) + n H(+)(out). The enzyme catalyses a plastoquinone + NADPH + (n+1) H(+)(in) = a plastoquinol + NADP(+) + n H(+)(out). Functionally, NDH shuttles electrons from NAD(P)H:plastoquinone, via FMN and iron-sulfur (Fe-S) centers, to quinones in the photosynthetic chain and possibly in a chloroplast respiratory chain. The immediate electron acceptor for the enzyme in this species is believed to be plastoquinone. Couples the redox reaction to proton translocation, and thus conserves the redox energy in a proton gradient. The chain is NAD(P)H-quinone oxidoreductase subunit 6, chloroplastic (ndhG) from Oenothera argillicola (Appalachian evening primrose).